The primary structure comprises 350 residues: Probable L-aspartate decarboxylase (350 aa).

Position 206 is an N6-(pyridoxal phosphate)lysine (Lys206).

The protein belongs to the group II decarboxylase family. MfnA subfamily. Pyridoxal 5'-phosphate serves as cofactor.

It carries out the reaction L-aspartate + H(+) = beta-alanine + CO2. It functions in the pathway cofactor biosynthesis; coenzyme A biosynthesis. Catalyzes the decarboxylation of L-aspartate to produce beta-alanine. The sequence is that of Probable L-aspartate decarboxylase from Haloarcula marismortui (strain ATCC 43049 / DSM 3752 / JCM 8966 / VKM B-1809) (Halobacterium marismortui).